Reading from the N-terminus, the 612-residue chain is 1,8-cineole synthase, chloroplastic (612 aa).

The transit peptide at Met-1–Thr-52 directs the protein to the chloroplast. Positions 363, 367, and 515 each coordinate Mg(2+). The short motif at Asp-363–Asp-367 is the DDXXD motif element.

This sequence belongs to the terpene synthase family. Tpsd subfamily. The cofactor is Mg(2+). Requires Mn(2+) as cofactor.

The protein resides in the plastid. It is found in the chloroplast. The catalysed reaction is (2E)-geranyl diphosphate + H2O = 1,8-cineole + diphosphate. It participates in terpene metabolism; oleoresin biosynthesis. Functionally, terpene synthase (TPS) involved in the biosynthesis of monoterpene natural products included in conifer oleoresin secretions and volatile emissions; these compounds contribute to biotic and abiotic stress defense against herbivores and pathogens. Catalyzes the conversion of (2E)-geranyl diphosphate (GPP) to 1,8-cineole. This is 1,8-cineole synthase, chloroplastic from Picea sitchensis (Sitka spruce).